Consider the following 437-residue polypeptide: Protein farnesyltransferase subunit beta (437 aa).

PFTB repeat units lie at residues 123-164, 174-215, 222-263, 270-312, and 332-374; these read ATDV…CIIG, REKL…SLTN, FEGT…VILK, LKSL…PLLH, and QQAL…SIAQ. (2E,6E)-farnesyl diphosphate is bound by residues 248–251 and 291–294; these read HGGY and RCNK. Zn(2+)-binding residues include Asp297 and Cys299. Residue 300 to 303 participates in (2E,6E)-farnesyl diphosphate binding; that stretch reads YSFW. Residue His362 coordinates Zn(2+). Residue Ser432 is modified to Phosphoserine. Residue Thr436 is modified to Phosphothreonine.

It belongs to the protein prenyltransferase subunit beta family. Heterodimer of FNTA and FNTB. The cofactor is Zn(2+).

The catalysed reaction is L-cysteinyl-[protein] + (2E,6E)-farnesyl diphosphate = S-(2E,6E)-farnesyl-L-cysteinyl-[protein] + diphosphate. Essential subunit of the farnesyltransferase complex. Catalyzes the transfer of a farnesyl moiety from farnesyl diphosphate to a cysteine at the fourth position from the C-terminus of several proteins having the C-terminal sequence Cys-aliphatic-aliphatic-X. In Mus musculus (Mouse), this protein is Protein farnesyltransferase subunit beta (Fntb).